We begin with the raw amino-acid sequence, 698 residues long: MOXD1 homolog 1 (698 aa).

A signal peptide spans 1–20; that stretch reads MSVQDVLWIVLTVQLSFGLA. N-linked (GlcNAc...) asparagine glycans are attached at residues N36, N140, and N221. In terms of domain architecture, DOMON spans 54–174; it reads GLYWLKWWIN…DTFKVLWSIG (121 aa). Residue Y232 is part of the active site. 2 residues coordinate Cu cation: H265 and H266. Cysteines 272 and 309 form a disulfide. Positions 347, 425, and 427 each coordinate Cu cation. 2 disulfide bridges follow: C403–C516 and C479–C501. H425 is a catalytic residue. N465 carries an N-linked (GlcNAc...) asparagine glycan. Residue M500 coordinates Cu cation. 2 N-linked (GlcNAc...) asparagine glycosylation sites follow: N538 and N561.

Belongs to the copper type II ascorbate-dependent monooxygenase family. It depends on Cu(2+) as a cofactor.

The protein localises to the secreted. This Drosophila melanogaster (Fruit fly) protein is MOXD1 homolog 1.